We begin with the raw amino-acid sequence, 300 residues long: Ribosomal protein bS6--L-glutamate ligase (300 aa).

Residues 104–287 (LQLLARQGID…IAGRMIQWIE (184 aa)) form the ATP-grasp domain. ATP contacts are provided by residues K141, 178–179 (EY), D187, and 211–213 (RSN). Residues D248, E260, and N262 each contribute to the Mg(2+) site. Residues D248, E260, and N262 each contribute to the Mn(2+) site.

This sequence belongs to the RimK family. The cofactor is Mg(2+). Requires Mn(2+) as cofactor.

In terms of biological role, an L-glutamate ligase that catalyzes the ATP-dependent post-translational addition of glutamate residues to the C-terminus of ribosomal protein bS6 (RpsF). Is also able to catalyze the synthesis of poly-alpha-glutamate in vitro, via ATP hydrolysis from unprotected glutamate as substrate. The number of glutamate residues added to either RpsF or to poly-alpha-glutamate changes with pH. The protein is Ribosomal protein bS6--L-glutamate ligase of Salmonella agona (strain SL483).